The primary structure comprises 94 residues: Large ribosomal subunit protein uL23 (94 aa).

The protein belongs to the universal ribosomal protein uL23 family. In terms of assembly, part of the 50S ribosomal subunit. Contacts protein L29, and trigger factor when it is bound to the ribosome.

Functionally, one of the early assembly proteins it binds 23S rRNA. One of the proteins that surrounds the polypeptide exit tunnel on the outside of the ribosome. Forms the main docking site for trigger factor binding to the ribosome. The sequence is that of Large ribosomal subunit protein uL23 from Dehalococcoides mccartyi (strain ATCC BAA-2266 / KCTC 15142 / 195) (Dehalococcoides ethenogenes (strain 195)).